The following is an 88-amino-acid chain: Small ribosomal subunit protein uS15 (88 aa).

Belongs to the universal ribosomal protein uS15 family. In terms of assembly, part of the 30S ribosomal subunit. Forms a bridge to the 50S subunit in the 70S ribosome, contacting the 23S rRNA.

Its function is as follows. One of the primary rRNA binding proteins, it binds directly to 16S rRNA where it helps nucleate assembly of the platform of the 30S subunit by binding and bridging several RNA helices of the 16S rRNA. In terms of biological role, forms an intersubunit bridge (bridge B4) with the 23S rRNA of the 50S subunit in the ribosome. The sequence is that of Small ribosomal subunit protein uS15 from Geobacter sulfurreducens (strain ATCC 51573 / DSM 12127 / PCA).